A 29-amino-acid chain; its full sequence is Dermaseptin-S5 (29 aa).

This sequence belongs to the frog skin active peptide (FSAP) family. Dermaseptin subfamily. In terms of tissue distribution, expressed by the skin glands.

The protein localises to the secreted. Its function is as follows. Potent antimicrobial peptide with activity against bacteria and protozoa. Also has activity against fungi. Probably acts by disturbing membrane functions with its amphipathic structure. This Phyllomedusa sauvagei (Sauvage's leaf frog) protein is Dermaseptin-S5.